Consider the following 391-residue polypeptide: MILNCPHFQQQDCVSCQWLEKPYATQLTDKEIDLKRLISPFILQNFTEILPPVQSSQKQFRNKAKMVVSGSVERPILGILKDQTDPQSGIDLCDCPLYPTEFEALFPILKDFIARAGLVPYNISKKKGELKYILITQSRYNQSIMLRFVLKSEQKRPLVERELPNLLAKLPKDSVVSLNIQPQHAAILEGETEIFLTEKTTIEENFNDIPLFIRPQGFFQTNPNVASQLYATAQNWIKDLAIQQFWDLFCGVGGFGLHCAKALQEKNENVQLTGIEISASAIASATKSAEQLQLKNITFASLDSAQFALNEKSATPDLVIVNPPRRGIGKPLAEFLNQLGTPYLIYSSCNARTMAQDFEALSNYSLQKVQLFDMFPHTSHYEVLTFLVKKS.

Residues C5, C13, C16, and C95 each contribute to the [4Fe-4S] cluster site. Residues Q220, F249, E276, and N322 each contribute to the S-adenosyl-L-methionine site. The active-site Nucleophile is C349.

Belongs to the class I-like SAM-binding methyltransferase superfamily. RNA M5U methyltransferase family. RlmC subfamily.

It catalyses the reaction uridine(747) in 23S rRNA + S-adenosyl-L-methionine = 5-methyluridine(747) in 23S rRNA + S-adenosyl-L-homocysteine + H(+). Catalyzes the formation of 5-methyl-uridine at position 747 (m5U747) in 23S rRNA. This chain is 23S rRNA (uracil(747)-C(5))-methyltransferase RlmC, found in Actinobacillus pleuropneumoniae serotype 5b (strain L20).